Reading from the N-terminus, the 407-residue chain is Prolyl hydroxylase EGLN2 (407 aa).

Composition is skewed to low complexity over residues 1-24 (MDSP…SSEP) and 57-75 (ASAG…TASP). 3 disordered regions span residues 1-34 (MDSP…RARM), 50-89 (CPGV…GELR), and 108-157 (AAQG…CSSG). Positions 89-134 (RPLQSEGAAALVTKGCQRLAAQGARPEAPKRKWAEDGGDAPSPSKR) match the Bipartite nuclear localization signal motif. Ser130 carries the post-translational modification Phosphoserine. Residues 225 to 235 (VSQRAIPPRSI) are beta(2)beta(3) 'finger-like' loop. In terms of domain architecture, Fe2OG dioxygenase spans 278–376 (GRTKAMVACY…RYAITVWYFD (99 aa)). The Fe cation site is built by His297, Asp299, and His358. Arg367 is a binding site for 2-oxoglutarate.

In terms of assembly, interacts (preferably isoform p40) with SIAH2; the interaction targets both SIAH2 isoforms for proteasomal degradation in vitro. Interacts with LIMD1, WTIP and AJUBA. Fe(2+) is required as a cofactor. Requires L-ascorbate as cofactor. Post-translationally, ubiquitinated by SIAH1 and/or SIAH2 in response to the unfolded protein response (UPR), leading to its degradation. Expressed in adult and fetal heart, brain, liver, lung, skeletal muscle, and kidney. Also expressed in testis and placenta. Highest levels in adult brain, placenta, lung, kidney, and testis. Expressed in hormone responsive tissues, including normal and cancerous mammary, ovarian and prostate epithelium.

It is found in the nucleus. It carries out the reaction L-prolyl-[protein] + 2-oxoglutarate + O2 = trans-4-hydroxy-L-prolyl-[protein] + succinate + CO2. The catalysed reaction is L-prolyl-[hypoxia-inducible factor alpha subunit] + 2-oxoglutarate + O2 = trans-4-hydroxy-L-prolyl-[hypoxia-inducible factor alpha subunit] + succinate + CO2. Functionally, prolyl hydroxylase that mediates hydroxylation of proline residues in target proteins, such as ATF4, IKBKB, CEP192 and HIF1A. Target proteins are preferentially recognized via a LXXLAP motif. Cellular oxygen sensor that catalyzes, under normoxic conditions, the post-translational formation of 4-hydroxyproline in hypoxia-inducible factor (HIF) alpha proteins. Hydroxylates a specific proline found in each of the oxygen-dependent degradation (ODD) domains (N-terminal, NODD, and C-terminal, CODD) of HIF1A. Also hydroxylates HIF2A. Has a preference for the CODD site for both HIF1A and HIF2A. Hydroxylated HIFs are then targeted for proteasomal degradation via the von Hippel-Lindau ubiquitination complex. Under hypoxic conditions, the hydroxylation reaction is attenuated allowing HIFs to escape degradation resulting in their translocation to the nucleus, heterodimerization with HIF1B, and increased expression of hypoxy-inducible genes. EGLN2 is involved in regulating hypoxia tolerance and apoptosis in cardiac and skeletal muscle. Also regulates susceptibility to normoxic oxidative neuronal death. Links oxygen sensing to cell cycle and primary cilia formation by hydroxylating the critical centrosome component CEP192 which promotes its ubiquitination and subsequent proteasomal degradation. Hydroxylates IKBKB, mediating NF-kappa-B activation in hypoxic conditions. Also mediates hydroxylation of ATF4, leading to decreased protein stability of ATF4. The sequence is that of Prolyl hydroxylase EGLN2 from Homo sapiens (Human).